Consider the following 431-residue polypeptide: Probable amino-acid ABC transporter periplasmic-binding protein y4oP (431 aa).

The first 25 residues, Met-1–Ala-25, serve as a signal peptide directing secretion.

It belongs to the bacterial solute-binding protein 1 family.

The protein resides in the periplasm. In terms of biological role, probably part of the binding-protein-dependent transport system y4oPQRS. This system probably transports a sugar-like molecule. The chain is Probable amino-acid ABC transporter periplasmic-binding protein y4oP from Sinorhizobium fredii (strain NBRC 101917 / NGR234).